The primary structure comprises 256 residues: Imidazole glycerol phosphate synthase subunit HisF (256 aa).

Active-site residues include aspartate 12 and aspartate 131.

Belongs to the HisA/HisF family. As to quaternary structure, heterodimer of HisH and HisF.

The protein resides in the cytoplasm. The enzyme catalyses 5-[(5-phospho-1-deoxy-D-ribulos-1-ylimino)methylamino]-1-(5-phospho-beta-D-ribosyl)imidazole-4-carboxamide + L-glutamine = D-erythro-1-(imidazol-4-yl)glycerol 3-phosphate + 5-amino-1-(5-phospho-beta-D-ribosyl)imidazole-4-carboxamide + L-glutamate + H(+). It functions in the pathway amino-acid biosynthesis; L-histidine biosynthesis; L-histidine from 5-phospho-alpha-D-ribose 1-diphosphate: step 5/9. Functionally, IGPS catalyzes the conversion of PRFAR and glutamine to IGP, AICAR and glutamate. The HisF subunit catalyzes the cyclization activity that produces IGP and AICAR from PRFAR using the ammonia provided by the HisH subunit. The protein is Imidazole glycerol phosphate synthase subunit HisF of Pseudomonas putida (strain ATCC 700007 / DSM 6899 / JCM 31910 / BCRC 17059 / LMG 24140 / F1).